The chain runs to 252 residues: Thiamine thiazole synthase (252 aa).

NAD(+) contacts are provided by residues S35, 54 to 55 (EK), G62, V126, and 152 to 154 (HVD). The Fe cation site is built by D154 and H169. Position 217 (M217) interacts with NAD(+). R227 provides a ligand contact to glycine.

It belongs to the THI4 family. As to quaternary structure, homooctamer; tetramer of dimers. The cofactor is Fe(2+).

The enzyme catalyses hydrogen sulfide + glycine + NAD(+) = ADP-5-ethyl-4-methylthiazole-2-carboxylate + nicotinamide + 3 H2O + H(+). It functions in the pathway cofactor biosynthesis; thiamine diphosphate biosynthesis. In terms of biological role, involved in the biosynthesis of the thiazole moiety of thiamine. Catalyzes the conversion of NAD and glycine to adenosine diphosphate 5-(2-hydroxyethyl)-4-methylthiazole-2-carboxylate (ADT), an adenylated thiazole intermediate, using free sulfide as a source of sulfur. The protein is Thiamine thiazole synthase of Pyrococcus furiosus (strain ATCC 43587 / DSM 3638 / JCM 8422 / Vc1).